We begin with the raw amino-acid sequence, 222 residues long: MILSKRPHLMIRKLSEMLVPRSRSAAIKPEEYTASPRSPLDLNFPSPVHSKRFGSGGVGLGIVAALEETSNGINRHDPVRYSGRFRCPEIDLSDEEYTYVTSPNGPTKVYYNDDGFELSENDYRRVHKPMVTVDEPPVIERQSVRGPTEFLSSCCLCKKKLQGKDIYMYKGEMGFCSAECRSVQIMNDERQEQCKTQVSRNADVLSSPYAAGQRLSAGVFVF.

The segment at glutamate 149–glutamate 192 adopts an FLZ-type zinc-finger fold.

The protein belongs to the FLZ family. Interacts with KIN10 and KIN11 via its FLZ-type zinc finger domain. Interacts with KINB1, KINB2, KINB3 and SNF4 via its N-terminal part.

It is found in the nucleus. The protein localises to the cytoplasm. Functionally, may act as an adapter to facilitate the interaction of SnRK1 complex with effector proteins, conferring tissue- and stimulus-type specific differences in the SnRK1 regulation pathway. In Arabidopsis thaliana (Mouse-ear cress), this protein is FCS-Like Zinc finger 13.